A 188-amino-acid polypeptide reads, in one-letter code: Elongation factor P (188 aa).

It belongs to the elongation factor P family.

Its subcellular location is the cytoplasm. The protein operates within protein biosynthesis; polypeptide chain elongation. Functionally, involved in peptide bond synthesis. Stimulates efficient translation and peptide-bond synthesis on native or reconstituted 70S ribosomes in vitro. Probably functions indirectly by altering the affinity of the ribosome for aminoacyl-tRNA, thus increasing their reactivity as acceptors for peptidyl transferase. This chain is Elongation factor P, found in Acidiphilium cryptum (strain JF-5).